Reading from the N-terminus, the 273-residue chain is Urease accessory protein UreD (273 aa).

It belongs to the UreD family. In terms of assembly, ureD, UreF and UreG form a complex that acts as a GTP-hydrolysis-dependent molecular chaperone, activating the urease apoprotein by helping to assemble the nickel containing metallocenter of UreC. The UreE protein probably delivers the nickel.

The protein localises to the cytoplasm. Required for maturation of urease via the functional incorporation of the urease nickel metallocenter. The polypeptide is Urease accessory protein UreD (Mycolicibacterium gilvum (strain PYR-GCK) (Mycobacterium gilvum (strain PYR-GCK))).